Reading from the N-terminus, the 221-residue chain is Thymine/uracil-DNA glycosylase (221 aa).

The region spanning 105–133 is the HhH domain; it reads DYGGRVPRNRKAILDLPGVGKYTCAAVMC. [4Fe-4S] cluster is bound by residues C197, C204, C207, and C213.

It belongs to the Nth/MutY family. [4Fe-4S] cluster serves as cofactor.

It catalyses the reaction Hydrolyzes mismatched double-stranded DNA and polynucleotides, releasing free thymine.. Its function is as follows. DNA glycosylase that excises thymine from T/G mismatches and uracil from U/G mismatches. Acts as a repair enzyme able to counteract the mutagenic effect of spontaneous hydrolytic deamination of DNA 5-methylcytosine (5-meC) residues that leads to the formation of T/G mismatches. May also repair U/G mismatches arising from hydrolytic deamination of DNA cytosine residues. G/G, A/G, T/C and U/C are minor substrates. This Methanothermobacter thermautotrophicus (Methanobacterium thermoformicicum) protein is Thymine/uracil-DNA glycosylase.